A 254-amino-acid chain; its full sequence is 3-deoxy-manno-octulosonate cytidylyltransferase (254 aa).

Belongs to the KdsB family.

It localises to the cytoplasm. The catalysed reaction is 3-deoxy-alpha-D-manno-oct-2-ulosonate + CTP = CMP-3-deoxy-beta-D-manno-octulosonate + diphosphate. The protein operates within nucleotide-sugar biosynthesis; CMP-3-deoxy-D-manno-octulosonate biosynthesis; CMP-3-deoxy-D-manno-octulosonate from 3-deoxy-D-manno-octulosonate and CTP: step 1/1. It functions in the pathway bacterial outer membrane biogenesis; lipopolysaccharide biosynthesis. Its function is as follows. Activates KDO (a required 8-carbon sugar) for incorporation into bacterial lipopolysaccharide in Gram-negative bacteria. This chain is 3-deoxy-manno-octulosonate cytidylyltransferase, found in Haemophilus influenzae (strain PittEE).